Reading from the N-terminus, the 145-residue chain is Probable DNA-directed RNA polymerases I and III subunit RPAC2 (145 aa).

Residues 1–52 (MGKKSEKKVVEETMEVDEQPAVEPEAVPEEEPEVEDEDLNVPKKKKMEILDP) are disordered. A compositionally biased stretch (acidic residues) spans 12–39 (ETMEVDEQPAVEPEAVPEEEPEVEDEDL).

Belongs to the archaeal Rpo11/eukaryotic RPB11/RPC19 RNA polymerase subunit family. In terms of assembly, component of the RNA polymerase I (Pol I) and RNA polymerase III (Pol III) complexes consisting of at least 13 and 17 subunits, respectively.

It localises to the nucleus. DNA-dependent RNA polymerase catalyzes the transcription of DNA into RNA using the four ribonucleoside triphosphates as substrates. Common core component of RNA polymerases I and III which synthesize ribosomal RNA precursors and small RNAs, such as 5S rRNA and tRNAs, respectively. The protein is Probable DNA-directed RNA polymerases I and III subunit RPAC2 (rpac-19) of Caenorhabditis briggsae.